We begin with the raw amino-acid sequence, 21 residues long: Large ribosomal subunit protein uL30 (21 aa).

Residues 1 to 15 are compositionally biased toward polar residues; it reads AKTENKTVTVRQTAS. Residues 1-21 form a disordered region; it reads AKTENKTVTVRQTASPIXXXK.

This sequence belongs to the universal ribosomal protein uL30 family. Part of the 50S ribosomal subunit.

In Brevundimonas diminuta (Pseudomonas diminuta), this protein is Large ribosomal subunit protein uL30 (rpmD).